Here is a 141-residue protein sequence, read N- to C-terminus: Large ribosomal subunit protein uL16 (141 aa).

Belongs to the universal ribosomal protein uL16 family. Part of the 50S ribosomal subunit.

Binds 23S rRNA and is also seen to make contacts with the A and possibly P site tRNAs. The polypeptide is Large ribosomal subunit protein uL16 (Deinococcus geothermalis (strain DSM 11300 / CIP 105573 / AG-3a)).